We begin with the raw amino-acid sequence, 402 residues long: Baeyer-Villiger oxidase notM (402 aa).

This sequence belongs to the questin oxidase family.

In terms of biological role, baeyer-Villiger oxidase; part of the gene cluster that mediates the biosynthesis of notoamide, a fungal indole alkaloid that belongs to a family of natural products containing a characteristic bicyclo[2.2.2]diazaoctane core. The first step of notoamide biosynthesis involves coupling of L-proline and L-tryptophan by the bimodular NRPS notE, to produce cyclo-L-tryptophan-L-proline called brevianamide F. The reverse prenyltransferase notF then acts as a deoxybrevianamide E synthase and converts brevianamide F to deoxybrevianamide E via reverse prenylation at C-2 of the indole ring leading to the bicyclo[2.2.2]diazaoctane core. Deoxybrevianamide E is further hydroxylated at C-6 of the indole ring, likely catalyzed by the cytochrome P450 monooxygenase notG, to yield 6-hydroxy-deoxybrevianamide E. 6-hydroxy-deoxybrevianamide E is a specific substrate of the prenyltransferase notC for normal prenylation at C-7 to produce 6-hydroxy-7-prenyl-deoxybrevianamide, also called notoamide S. As the proposed pivotal branching point in notoamide biosynthesis, notoamide S can be diverted to notoamide E through an oxidative pyran ring closure putatively catalyzed by either notH cytochrome P450 monooxygenase or the notD FAD-linked oxidoreductase. This step would be followed by an indole 2,3-epoxidation-initiated pinacol-like rearrangement catalyzed by the notB FAD-dependent monooxygenase leading to the formation of notoamide C and notoamide D. On the other hand notoamide S is converted to notoamide T by notH (or notD), a bifunctional oxidase that also functions as the intramolecular Diels-Alderase responsible for generation of (+)-notoamide T. To generate antipodal (-)-notoaminide T, notH' (or notD') in Aspergillus versicolor is expected to catalyze a Diels-Alder reaction leading to the opposite stereochemistry. The remaining oxidoreductase notD (or notH) likely catalyzes the oxidative pyran ring formation to yield (+)-stephacidin A. The FAD-dependent monooxygenase notI is highly similar to notB and is predicted to catalyze a similar conversion from (+)-stephacidin A to (-)-notoamide B via the 2,3-epoxidation of (+)-stephacidin A followed by a pinacol-type rearrangement. Finally, it remains unclear which enzyme could be responsible for the final hydroxylation steps leading to notoamide A and sclerotiamide. The function of notM in the notoamide biosynthesis has not been determined yet. This Aspergillus sp. (strain MF297-2) protein is Baeyer-Villiger oxidase notM.